We begin with the raw amino-acid sequence, 829 residues long: Genome polyprotein (829 aa).

Position 2 is an N-acetylserine; by host (serine 2). Residues 2–23 (STNPKPQRKTKRNTNRRPQDVK) form an interaction with STAT1 region. The interaction with EIF2AK2/PKR stretch occupies residues 2–58 (STNPKPQRKTKRNTNRRPQDVKFPGGGQIVGGVYLLPRRGPRLGVRATRKTSERSQP). Residues 2–59 (STNPKPQRKTKRNTNRRPQDVKFPGGGQIVGGVYLLPRRGPRLGVRATRKTSERSQPR) are interaction with DDX3X. A disordered region spans residues 2–75 (STNPKPQRKT…PKARRPKGRN (74 aa)). At 2-168 (STNPKPQRKT…EDGVNYATGN (167 aa)) the chain is on the cytoplasmic side. Short sequence motifs (nuclear localization signal) lie at residues 5 to 13 (PKPQRKTKR) and 38 to 43 (PRRGPR). Residues 7–16 (PQRKTKRNTN) are compositionally biased toward basic residues. Residues 32-47 (GGVYLLPRRGPRLGVR) show a composition bias toward low complexity. At serine 53 the chain carries Phosphoserine; by host. 2 consecutive short sequence motifs (nuclear localization signal) follow at residues 58-64 (PRGRRQP) and 66-71 (PKARRP). Residues 58–73 (PRGRRQPIPKARRPKG) show a composition bias toward basic residues. Phosphoserine; by host is present on serine 99. Residues 112-152 (PRRRSRNLGKVIDTLTCGFVDLMGYIPLVGAPLRGAARALA) are important for endoplasmic reticulum and mitochondrial localization. Position 116 is a phosphoserine; by host PKA (serine 116). Residues 122–173 (VIDTLTCGFVDLMGYIPLVGAPLRGAARALAHGVRVLEDGVNYATGNLPGCS) are interaction with APOA2. The important for lipid droplets localization stretch occupies residues 164-167 (YATG). The chain crosses the membrane as a helical span at residues 169 to 189 (LPGCSFSIFLLALLSCLTVPA). Residues 178–191 (LLALLSCLTVPASA) constitute a propeptide, ER anchor for the core protein, removed in mature form by host signal peptidase. At 190 to 358 (SAYQVRNSTG…AGAHWGVLAG (169 aa)) the chain is on the lumenal side. N-linked (GlcNAc...) asparagine; by host glycosylation is found at asparagine 196, asparagine 209, and asparagine 234. Positions 265-296 (LVGSATLCSALYVGDLCGSVFLVGQLFTFSPR) are important for fusion. N-linked (GlcNAc...) asparagine; by host glycosylation is present at asparagine 305. The chain crosses the membrane as a helical span at residues 359-379 (MAYFSMVGNWAKVLAVLLLFA). Residues 380 to 725 (GVDAETHVTG…WEYVVLLFLL (346 aa)) are Lumenal-facing. Residues 385–411 (THVTGGAAARSTLQLAGLFQPGAKQNV) form an HVR1 region. Asparagine 417, asparagine 423, asparagine 430, and asparagine 448 each carry an N-linked (GlcNAc...) (high mannose) asparagine; by host glycan. 4 cysteine pairs are disulfide-bonded: cysteine 429–cysteine 552, cysteine 452–cysteine 459, cysteine 486–cysteine 494, and cysteine 503–cysteine 508. Residues 474–479 (YAGGGG) form an HVR2 region. Residues 480 to 493 (PDHRPYCWHYPPKP) form a CD81-binding 1 region. N-linked (GlcNAc...) asparagine; by host glycosylation is present at asparagine 540. The CD81-binding 2 stretch occupies residues 544–551 (PPLGNWFG). Asparagine 556 carries an N-linked (GlcNAc...) (high mannose) asparagine; by host glycan. A disulfide bridge connects residues cysteine 564 and cysteine 569. Asparagine 576 carries an N-linked (GlcNAc...) (high mannose) asparagine; by host glycan. 3 cysteine pairs are disulfide-bonded: cysteine 581-cysteine 585, cysteine 597-cysteine 620, and cysteine 607-cysteine 644. 2 N-linked (GlcNAc...) (high mannose) asparagine; by host glycosylation sites follow: asparagine 623 and asparagine 645. A disulfide bridge connects residues cysteine 652 and cysteine 677. Positions 660 to 671 (SELSPLLLSTTQ) are PKR/eIF2-alpha phosphorylation homology domain (PePHD). The chain crosses the membrane as a helical span at residues 726–746 (LADARVCSCLWMMLLISQAEA). Topologically, residues 747–757 (ALENLVVLNAA) are lumenal. The helical transmembrane segment at 758–778 (SLAGTHGLVSFLVFFCFAWFL) threads the bilayer. At 779–781 (RGK) the chain is on the cytoplasmic side. Residues 782–803 (WVPGAVYALYGMWPLLLLLLAL) traverse the membrane as a helical segment. Residues 804 to 813 (PQRAYALDTE) lie on the Lumenal side of the membrane. Residues 814–829 (VAASCGGVVLVGLMAL) traverse the membrane as a helical segment.

This sequence belongs to the hepacivirus polyprotein family. In terms of assembly, homooligomer. Interacts with E1 (via C-terminus). Interacts with the non-structural protein 5A. Interacts (via N-terminus) with host STAT1 (via SH2 domain); this interaction results in decreased STAT1 phosphorylation and ubiquitin-mediated proteasome-dependent STAT1 degradation, leading to decreased IFN-stimulated gene transcription. Interacts with host STAT3; this interaction constitutively activates STAT3. Interacts with host LTBR receptor. Interacts with host TNFRSF1A receptor and possibly induces apoptosis. Interacts with host HNRPK. Interacts with host YWHAE. Interacts with host UBE3A/E6AP. Interacts with host DDX3X. Interacts with host APOA2. Interacts with host RXRA protein. Interacts with host SP110 isoform 3/Sp110b; this interaction sequesters the transcriptional corepressor SP110 away from the nucleus. Interacts with host CREB3 nuclear transcription protein; this interaction triggers cell transformation. Interacts with host ACY3. Interacts with host C1QR1. Interacts with host RBM24; this interaction, which enhances the interaction of the mature core protein with 5'-UTR, may inhibit viral translation and favor replication. Interacts with host EIF2AK2/PKR; this interaction induces the autophosphorylation of EIF2AK2. Part of the viral assembly initiation complex composed of NS2, E1, E2, NS3, NS4A, NS5A and the mature core protein. As to quaternary structure, forms a heterodimer with envelope glycoprotein E2. Interacts with mature core protein. Interacts with protease NS2. The heterodimer E1/E2 interacts with host CLDN1; this interaction plays a role in viral entry into host cell. Interacts with host SPSB2 (via C-terminus). Part of the viral assembly initiation complex composed of NS2, E1, E2, NS3, NS4A, NS5A and the mature core protein. Forms a heterodimer with envelope glycoprotein E1. Interacts with host CD81 and SCARB1 receptors; these interactions play a role in viral entry into host cell. Interacts with host EIF2AK2/PKR; this interaction inhibits EIF2AK2 and probably allows the virus to evade the innate immune response. Interacts with host CD209/DC-SIGN and CLEC4M/DC-SIGNR. Interact with host SPCS1; this interaction is essential for viral particle assembly. Interacts with protease NS2. The heterodimer E1/E2 interacts with host CLDN1; this interaction plays a role in viral entry into host cell. Part of the viral assembly initiation complex composed of NS2, E1, E2, NS3, NS4A, NS5A and the mature core protein. In terms of assembly, homohexamer. Homoheptamer. Interacts with protease NS2. As to quaternary structure, homodimer. Interacts with host SPCS1; this interaction is essential for viral particle assembly. Interacts with envelope glycoprotein E1. Interacts with envelope glycoprotein E2. Interacts with viroporin p7. Interacts with serine protease/helicase NS3. Part of the replication complex composed of NS2, NS3, NS4A, NS4B, NS5A and the RNA-directed RNA polymerase embedded in an ER-derived membranous web. Part of the viral assembly initiation complex composed of NS2, E1, E2, NS3, NS4A, NS5A and the mature core protein. It depends on Zn(2+) as a cofactor. Post-translationally, specific enzymatic cleavages in vivo yield mature proteins. The structural proteins, core, E1, E2 and p7 are produced by proteolytic processing by host signal peptidases. The core protein precursor is synthesized as a 23 kDa, which is retained in the ER membrane through the hydrophobic signal peptide. Cleavage by the signal peptidase releases the 21 kDa mature core protein. The cleavage of the core protein precursor occurs between aminoacids 176 and 188 but the exact cleavage site is not known. Some degraded forms of the core protein appear as well during the course of infection. The other proteins (p7, NS2, NS3, NS4A, NS4B, NS5A and NS5B) are cleaved by the viral proteases. Autoprocessing between NS2 and NS3 is mediated by the NS2 cysteine protease catalytic domain and regulated by the NS3 N-terminal domain. Phosphorylated by host PKC and PKA. In terms of processing, ubiquitinated; mediated by UBE3A and leading to core protein subsequent proteasomal degradation. Post-translationally, highly N-glycosylated. Palmitoylation is required for NS2/3 autoprocessing and E2 recruitment to membranes.

The protein resides in the host endoplasmic reticulum membrane. The protein localises to the host mitochondrion membrane. It is found in the virion. Its subcellular location is the host cytoplasm. It localises to the host nucleus. The protein resides in the host lipid droplet. The protein localises to the virion membrane. It is found in the host mitochondrion. Its subcellular location is the host cell membrane. Inhibited by the antiviral drug hexamethylene amiloride. Inhibition by amantadine appears to be genotype-dependent. Also inhibited by long-alkyl-chain iminosugar derivatives. In terms of biological role, packages viral RNA to form a viral nucleocapsid, and promotes virion budding. Participates in the viral particle production as a result of its interaction with the non-structural protein 5A. Binds RNA and may function as a RNA chaperone to induce the RNA structural rearrangements taking place during virus replication. Modulates viral translation initiation by interacting with viral IRES and 40S ribosomal subunit. Affects various cell signaling pathways, host immunity and lipid metabolism. Prevents the establishment of cellular antiviral state by blocking the interferon-alpha/beta (IFN-alpha/beta) and IFN-gamma signaling pathways and by blocking the formation of phosphorylated STAT1 and promoting ubiquitin-mediated proteasome-dependent degradation of STAT1. Activates STAT3 leading to cellular transformation. Regulates the activity of cellular genes, including c-myc and c-fos. May repress the promoter of p53, and sequester CREB3 and SP110 isoform 3/Sp110b in the cytoplasm. Represses cell cycle negative regulating factor CDKN1A, thereby interrupting an important check point of normal cell cycle regulation. Targets transcription factors involved in the regulation of inflammatory responses and in the immune response: suppresses TNF-induced NF-kappa-B activation, and activates AP-1. Binds to dendritic cells (DCs) via C1QR1, resulting in down-regulation of T-lymphocytes proliferation. Alters lipid metabolism by interacting with hepatocellular proteins involved in lipid accumulation and storage. Induces up-regulation of FAS promoter activity, and thereby contributes to the increased triglyceride accumulation in hepatocytes (steatosis). Its function is as follows. Forms a heterodimer with envelope glycoprotein E2, which mediates virus attachment to the host cell, virion internalization through clathrin-dependent endocytosis and fusion with host membrane. Fusion with the host cell is most likely mediated by both E1 and E2, through conformational rearrangements of the heterodimer required for fusion rather than a classical class II fusion mechanism. E1/E2 heterodimer binds host apolipoproteins such as APOB and ApoE thereby forming a lipo-viro-particle (LVP). APOE associated to the LVP allows the initial virus attachment to cell surface receptors such as the heparan sulfate proteoglycans (HSPGs), syndecan-1 (SDC1), syndecan-1 (SDC2), the low-density lipoprotein receptor (LDLR) and scavenger receptor class B type I (SCARB1). The cholesterol transfer activity of SCARB1 allows E2 exposure and binding of E2 to SCARB1 and the tetraspanin CD81. E1/E2 heterodimer binding on CD81 activates the epithelial growth factor receptor (EGFR) signaling pathway. Diffusion of the complex E1-E2-EGFR-SCARB1-CD81 to the cell lateral membrane allows further interaction with Claudin 1 (CLDN1) and occludin (OCLN) to finally trigger HCV entry. Functionally, forms a heterodimer with envelope glycoprotein E1, which mediates virus attachment to the host cell, virion internalization through clathrin-dependent endocytosis and fusion with host membrane. Fusion with the host cell is most likely mediated by both E1 and E2, through conformational rearrangements of the heterodimer required for fusion rather than a classical class II fusion mechanism. The interaction between envelope glycoprotein E2 and host apolipoprotein E/APOE allows the proper assembly, maturation and infectivity of the viral particles. This interaction is probably promoted via the up-regulation of cellular autophagy by the virus. E1/E2 heterodimer binds host apolipoproteins such as APOB and APOE thereby forming a lipo-viro-particle (LVP). APOE associated to the LVP allows the initial virus attachment to cell surface receptors such as the heparan sulfate proteoglycans (HSPGs), syndecan-1 (SDC1), syndecan-1 (SDC2), the low-density lipoprotein receptor (LDLR) and scavenger receptor class B type I (SCARB1). The cholesterol transfer activity of SCARB1 allows E2 exposure and binding of E2 to SCARB1 and the tetraspanin CD81. E1/E2 heterodimer binding on CD81 activates the epithelial growth factor receptor (EGFR) signaling pathway. Diffusion of the complex E1-E2-EGFR-SCARB1-CD81 to the cell lateral membrane allows further interaction with Claudin 1 (CLDN1) and occludin (OCLN) to finally trigger HCV entry. Inhibits host EIF2AK2/PKR activation, preventing the establishment of an antiviral state. Viral ligand for CD209/DC-SIGN and CLEC4M/DC-SIGNR, which are respectively found on dendritic cells (DCs), and on liver sinusoidal endothelial cells and macrophage-like cells of lymph node sinuses. These interactions allow the capture of circulating HCV particles by these cells and subsequent facilitated transmission to permissive cells such as hepatocytes and lymphocyte subpopulations. Ion channel protein that acts as a viroporin and plays an essential role in the assembly, envelopment and secretion of viral particles. Regulates the host cell secretory pathway, which induces the intracellular retention of viral glycoproteins and favors assembly of viral particles. Creates a pore in acidic organelles and releases Ca(2+) and H(+) in the cytoplasm of infected cells, leading to a productive viral infection. High levels of cytoplasmic Ca(2+) may trigger membrane trafficking and transport of viral ER-associated proteins to viroplasms, sites of viral genome replication. This ionic imbalance induces the assembly of the inflammasome complex, which triggers the maturation of pro-IL-1beta into IL-1beta through the action of caspase-1. Targets also host mitochondria and induces mitochondrial depolarization. In addition of its role as a viroporin, acts as a lipid raft adhesion factor. In terms of biological role, cysteine protease required for the proteolytic auto-cleavage between the non-structural proteins NS2 and NS3. The N-terminus of NS3 is required for the function of NS2 protease (active region NS2-3). Promotes the initiation of viral particle assembly by mediating the interaction between structural and non-structural proteins. The polypeptide is Genome polyprotein (Hepatitis C virus (isolate Glasgow) (HCV)).